The chain runs to 195 residues: Interferon omega-1 (195 aa).

An N-terminal signal peptide occupies residues 1-23 (MAFVLSLLMALVLVSYGPGGSLG). Cystine bridges form between cysteine 24/cysteine 122 and cysteine 52/cysteine 162.

Belongs to the alpha/beta interferon family.

The protein localises to the secreted. The chain is Interferon omega-1 (IFNW1) from Bos taurus (Bovine).